Reading from the N-terminus, the 1047-residue chain is Helicase-like transcription factor CHR27 (1047 aa).

Low complexity predominate over residues 1-11 (MDSAIEISSGS). Disordered stretches follow at residues 1–89 (MDSA…SGSG), 103–130 (RTLP…SGSR), and 145–174 (KRTL…GSRF). 2 stretches are compositionally biased toward polar residues: residues 52 to 88 (TNQA…SSGS) and 118 to 128 (SGTNNISNASG). In terms of domain architecture, Helicase ATP-binding spans 296–597 (ETSSFNCPGG…YSYFRFLRYD (302 aa)). 309–316 (DDQGLGKT) provides a ligand contact to ATP. Disordered regions lie at residues 349 to 407 (ADDE…TRAF) and 511 to 533 (VGAS…SEPD). Over residues 354–368 (DNAKHESGSHVKPEL) the composition is skewed to basic and acidic residues. The segment covering 370 to 379 (VSSNSETSVL) has biased composition (polar residues). Positions 385 to 400 (DENDSSDMEKAEDEEA) are enriched in acidic residues. Positions 511-523 (VGASKKSKRRGRK) are enriched in basic residues. An RING-type; degenerate zinc finger spans residues 751-790 (CYECNEPPEKPVVTLCGHIFCYECVLEYITGDENTCPVPR). Polar residues predominate over residues 851–868 (QPDSPNSAQHGQMPSSSR). The segment at 851–873 (QPDSPNSAQHGQMPSSSRPYDDD) is disordered. The 156-residue stretch at 887–1042 (SPSQGAVKTI…ATRLTVDDLK (156 aa)) folds into the Helicase C-terminal domain.

Belongs to the SNF2/RAD54 helicase family. RAD16 subfamily. Interacts with SUVR2. Interacts with itself.

The protein resides in the nucleus. Probable helicase-like transcription factor involved in transcriptional gene silencing. Associates with SUVR2 and contributes to transcriptional gene silencing at RNA-directed DNA methylation (RdDM) target loci but also at RdDM-independent target loci. May be involved in nucleosome positioning to form ordered nucleosome arrays on chromatin. Associates with SUVR2 and functions redundantly with FRG2. Required for the efficient methylation of a broad range of RdDM target loci. The sequence is that of Helicase-like transcription factor CHR27 from Arabidopsis thaliana (Mouse-ear cress).